The primary structure comprises 447 residues: Serine/threonine-protein phosphatase 2A 55 kDa regulatory subunit B gamma isoform (447 aa).

WD repeat units lie at residues 22–61 (TPAD…KNAP), 87–128 (EIEE…KRPE), 171–209 (GHTY…RSFN), 220–260 (DLTE…LCDK), 279–317 (EIIS…RPIE), 334–375 (ENDC…DVTL), and 410–446 (DFTK…NSDM).

It belongs to the phosphatase 2A regulatory subunit B family. As to quaternary structure, PP2A consists of a common heterodimeric core enzyme, composed of a 36 kDa catalytic subunit (subunit C) and a 65 kDa constant regulatory subunit (PR65 or subunit A), that associates with a variety of regulatory subunits. Proteins that associate with the core dimer include three families of regulatory subunits B (the R2/B/PR55/B55, R3/B''/PR72/PR130/PR59 and R5/B'/B56 families), the 48 kDa variable regulatory subunit, viral proteins, and cell signaling molecules. Interacts with IER5.

Its function is as follows. The B regulatory subunit might modulate substrate selectivity and catalytic activity, and might also direct the localization of the catalytic enzyme to a particular subcellular compartment. This chain is Serine/threonine-protein phosphatase 2A 55 kDa regulatory subunit B gamma isoform (PPP2R2C), found in Macaca fascicularis (Crab-eating macaque).